A 156-amino-acid chain; its full sequence is Riboflavin synthase (156 aa).

This sequence belongs to the DMRL synthase family.

The enzyme catalyses 2 6,7-dimethyl-8-(1-D-ribityl)lumazine + H(+) = 5-amino-6-(D-ribitylamino)uracil + riboflavin. It participates in cofactor biosynthesis; riboflavin biosynthesis; riboflavin from 2-hydroxy-3-oxobutyl phosphate and 5-amino-6-(D-ribitylamino)uracil: step 2/2. The protein is Riboflavin synthase (ribC) of Methanocaldococcus jannaschii (strain ATCC 43067 / DSM 2661 / JAL-1 / JCM 10045 / NBRC 100440) (Methanococcus jannaschii).